The following is a 550-amino-acid chain: U-box domain-containing protein 40 (550 aa).

The span at 19–29 (KSDNLSRRESL) shows a compositional bias: basic and acidic residues. Positions 19-55 (KSDNLSRRESLAGKSKWRTSLSRSSSSSSSNNNSPTK) are disordered. Over residues 38 to 52 (SLSRSSSSSSSNNNS) the composition is skewed to low complexity. In terms of domain architecture, U-box spans 57 to 127 (EIPAEFLCPI…HSWCERRCFP (71 aa)). ARM repeat units follow at residues 260–299 (ESSR…NLSL), 301–340 (KSNK…SLAL), 342–381 (DENK…HLSL), 383–420 (QSNR…NMAS), and 422–464 (PVSR…GLSH).

It carries out the reaction S-ubiquitinyl-[E2 ubiquitin-conjugating enzyme]-L-cysteine + [acceptor protein]-L-lysine = [E2 ubiquitin-conjugating enzyme]-L-cysteine + N(6)-ubiquitinyl-[acceptor protein]-L-lysine.. It functions in the pathway protein modification; protein ubiquitination. In terms of biological role, functions as an E3 ubiquitin ligase. The polypeptide is U-box domain-containing protein 40 (PUB40) (Arabidopsis thaliana (Mouse-ear cress)).